A 367-amino-acid polypeptide reads, in one-letter code: Serine/threonine-protein kinase Sgk2 (367 aa).

The interval 1-28 is disordered; it reads MASSPVGVPSPQPSRANGNINLGPSANP. At Ser10 the chain carries Phosphoserine. Over residues 15–28 the composition is skewed to polar residues; sequence RANGNINLGPSANP. Positions 35–292 constitute a Protein kinase domain; sequence FDFLKVIGKG…FLDIKNHMFF (258 aa). ATP is bound by residues 41-49 and Lys64; that span reads IGKGNYGKV. The Nuclear localization signal signature appears at 68–77; that stretch reads KKSILKNKEQ. The Proton acceptor role is filled by Asp159. Thr193 is modified (phosphothreonine; by PDPK1). Positions 293–367 constitute an AGC-kinase C-terminal domain; the sequence is SPINWDDLYH…AQDDDDILDS (75 aa). Ser334 and Ser356 each carry phosphoserine. Tyr357 carries the post-translational modification Phosphotyrosine.

The protein belongs to the protein kinase superfamily. AGC Ser/Thr protein kinase family. In terms of processing, activated by phosphorylation on Ser-356 by an unknown kinase (may be mTORC2 but not confirmed), transforming it into a substrate for PDPK1 which then phosphorylates it on Thr-193. Expressed in the proximal tubule and thick ascending limb of the loop of Henle (TALH).

The protein resides in the cytoplasm. It is found in the nucleus. It catalyses the reaction L-seryl-[protein] + ATP = O-phospho-L-seryl-[protein] + ADP + H(+). The catalysed reaction is L-threonyl-[protein] + ATP = O-phospho-L-threonyl-[protein] + ADP + H(+). With respect to regulation, two specific sites, one in the kinase domain (Thr-193) and the other in the C-terminal regulatory region (Ser-356), need to be phosphorylated for its full activation. Functionally, serine/threonine-protein kinase which is involved in the regulation of a wide variety of ion channels, membrane transporters, cell growth, survival and proliferation. Up-regulates Na(+) channels: SCNN1A/ENAC, K(+) channels: KCNA3/Kv1.3, KCNE1 and KCNQ1, amino acid transporter: SLC6A19, glutamate transporter: SLC1A6/EAAT4, glutamate receptors: GRIA1/GLUR1 and GRIK2/GLUR6, Na(+)/H(+) exchanger: SLC9A3/NHE3, and the Na(+)/K(+) ATPase. In Rattus norvegicus (Rat), this protein is Serine/threonine-protein kinase Sgk2 (Sgk2).